The primary structure comprises 81 residues: Cell division protein ZapB (81 aa).

A coiled-coil region spans residues 5–81 (LEVFEKLESK…QALLGRMEEV (77 aa)). A disordered region spans residues 43 to 64 (VQSAQHGREELERENSQLKEQQ). Residues 48–59 (HGREELERENSQ) show a composition bias toward basic and acidic residues.

This sequence belongs to the ZapB family. As to quaternary structure, homodimer. The ends of the coiled-coil dimer bind to each other, forming polymers. Interacts with FtsZ.

Its subcellular location is the cytoplasm. Functionally, non-essential, abundant cell division factor that is required for proper Z-ring formation. It is recruited early to the divisome by direct interaction with FtsZ, stimulating Z-ring assembly and thereby promoting cell division earlier in the cell cycle. Its recruitment to the Z-ring requires functional FtsA or ZipA. The chain is Cell division protein ZapB from Klebsiella pneumoniae subsp. pneumoniae (strain ATCC 700721 / MGH 78578).